A 907-amino-acid chain; its full sequence is Catenin alpha-1 (907 aa).

N-acetylthreonine is present on Thr-2. The involved in homodimerization stretch occupies residues 2–228; it reads TAVHAGNINF…PILYTASQAC (227 aa). Lys-57 participates in a covalent cross-link: Glycyl lysine isopeptide (Lys-Gly) (interchain with G-Cter in SUMO2). Residues 97–148 form an interaction with JUP and CTNNB1 region; the sequence is VRKQGDLMKSAAGEFADDPCSSVKRGNMVRAARALLSAVTRLLILADMADVY. Ser-264, Ser-268, Ser-296, and Ser-298 each carry phosphoserine. The tract at residues 326–395 is interaction with alpha-actinin; the sequence is TRDDRRERIV…AVMDHVSDSF (70 aa). The residue at position 635 (Thr-635) is a Phosphothreonine. Phosphoserine is present on Ser-642. At Thr-646 the chain carries Phosphothreonine. 2 positions are modified to phosphoserine: Ser-653 and Ser-656. A Phosphothreonine modification is found at Thr-659. A Glycyl lysine isopeptide (Lys-Gly) (interchain with G-Cter in SUMO2) cross-link involves residue Lys-798. Ser-852 is modified (phosphoserine). Residues 865-881 show a composition bias toward basic and acidic residues; it reads PEKKPLVKREKQDETQT. The interval 865-895 is disordered; the sequence is PEKKPLVKREKQDETQTKIKRASQKKHVNPV. Basic residues predominate over residues 882–892; it reads KIKRASQKKHV.

It belongs to the vinculin/alpha-catenin family. In terms of assembly, monomer and homodimer; the monomer preferentially binds to CTNNB1 and the homodimer to actin. Component of an cadherin:catenin adhesion complex composed of at least of CDH26, beta-catenin/CTNNB1, alpha-catenin/CTNNA1 and p120 catenin/CTNND1. Possible component of an E-cadherin/ catenin adhesion complex together with E-cadherin/CDH1 and beta-catenin/CTNNB1 or gamma-catenin/JUP; the complex is located to adherens junctions. The stable association of CTNNA1 is controversial as CTNNA1 was shown not to bind to F-actin when assembled in the complex. Alternatively, the CTNNA1-containing complex may be linked to F-actin by other proteins such as LIMA1. Binds AFDN and F-actin. Interacts with ARHGAP21. Interacts with AJUBA. Interacts with LIMA1. Interacts with vinculin/VCL. Interacts with TJP2/ZO2 (via N-terminus). Interacts with TJP1/ZO1 (via N-terminus). In terms of processing, sumoylated. Phosphorylation seems to contribute to the strength of cell-cell adhesion rather than to the basic capacity for cell-cell adhesion.

Its subcellular location is the cytoplasm. The protein resides in the cytoskeleton. It localises to the cell junction. It is found in the adherens junction. The protein localises to the cell membrane. Its subcellular location is the nucleus. Functionally, associates with the cytoplasmic domain of a variety of cadherins. The association of catenins to cadherins produces a complex which is linked to the actin filament network, and which seems to be of primary importance for cadherins cell-adhesion properties. Can associate with both E- and N-cadherins. Originally believed to be a stable component of E-cadherin/catenin adhesion complexes and to mediate the linkage of cadherins to the actin cytoskeleton at adherens junctions. In contrast, cortical actin was found to be much more dynamic than E-cadherin/catenin complexes and CTNNA1 was shown not to bind to F-actin when assembled in the complex suggesting a different linkage between actin and adherens junctions components. The homodimeric form may regulate actin filament assembly and inhibit actin branching by competing with the Arp2/3 complex for binding to actin filaments. Involved in the regulation of WWTR1/TAZ, YAP1 and TGFB1-dependent SMAD2 and SMAD3 nuclear accumulation. May play a crucial role in cell differentiation. The polypeptide is Catenin alpha-1 (Oryctolagus cuniculus (Rabbit)).